Here is a 301-residue protein sequence, read N- to C-terminus: Fatty acid elongase 3 (301 aa).

Transmembrane regions (helical) follow at residues 31 to 51 (VPYIAGVMYLILVLYVPKSIM), 64 to 84 (IVWNLFLTLFSMCGAYYTVPY), 122 to 142 (ALADSFYFNGDVGFWVALFAL), 161 to 181 (VIFLHWYHHLTVMLFCWFAYV), 187 to 207 (GLWFASMNYSVHSIMYLYYFV), 219 to 239 (FAPIITFVQIFQMVVGTIVVC), and 257 to 277 (FSLHTGLVMYVSYLLLFSQLF). The HxxHH motif signature appears at 165–169 (HWYHH). The active-site Nucleophile is H168.

The protein belongs to the ELO family.

The protein resides in the endoplasmic reticulum membrane. The enzyme catalyses an acyl-CoA + malonyl-CoA + H(+) = a 3-oxoacyl-CoA + CO2 + CoA. It participates in lipid metabolism; fatty acid biosynthesis. Its function is as follows. Involved in the synthesis of fatty acids. Elongates C14 fatty acids to C18. The sequence is that of Fatty acid elongase 3 from Trypanosoma brucei brucei (strain 927/4 GUTat10.1).